Here is a 251-residue protein sequence, read N- to C-terminus: NADPH-dependent oxidoreductase (251 aa).

This sequence belongs to the flavin oxidoreductase frp family. FMN serves as cofactor.

Its function is as follows. Reduces FMN, organic nitro compounds and disulfide DTNB. Involved in maintenance of the cellular redox state and the disulfide stress response. This chain is NADPH-dependent oxidoreductase (nfrA), found in Staphylococcus haemolyticus (strain JCSC1435).